The primary structure comprises 495 residues: Cobyric acid synthase (495 aa).

In terms of domain architecture, GATase cobBQ-type spans 250 to 444 (SLKISILRLP…LHGLFDNGAW (195 aa)). C331 serves as the catalytic Nucleophile. H436 is a catalytic residue.

Belongs to the CobB/CobQ family. CobQ subfamily.

The protein operates within cofactor biosynthesis; adenosylcobalamin biosynthesis. In terms of biological role, catalyzes amidations at positions B, D, E, and G on adenosylcobyrinic A,C-diamide. NH(2) groups are provided by glutamine, and one molecule of ATP is hydrogenolyzed for each amidation. The protein is Cobyric acid synthase of Rippkaea orientalis (strain PCC 8801 / RF-1) (Cyanothece sp. (strain PCC 8801)).